The chain runs to 381 residues: MSLNMFWFLPTHGDGHYLGTEEGSRSVDHGYLQQIAQVADRLGYTGVLIPTGRSCEDAWLVAASMIPVTQRLKFLVALRPSVTSPTVAARQAATLDRLSNGRALFNLVTGSDPQELAGDGVFLDHSERYEASAEFTQVWRRLLLGETVDFNGKHIHVRGAKLLFPPIQQPYPPLYFGGSSDVAQDLAAEQVDLYLTWGEPPELVKEKIAHVRAKAAAHGRKIRFGIRLHVIVRETNDEAWQAAERLISHLDDETIAKAQAAFARTDSVGQQRMAALHNGKRDNLEISPNLWAGVGLVRGGAGTALVGDGPTVAARINEYAALGIDSFVLSGYPHLEEAYRIGELLFPHLDVAIPEIPQPQLLNPQGEAVANDFIPRNVAQS.

This sequence belongs to the SsuD family. As to quaternary structure, homotetramer.

It catalyses the reaction an alkanesulfonate + FMNH2 + O2 = an aldehyde + FMN + sulfite + H2O + 2 H(+). Catalyzes the desulfonation of aliphatic sulfonates. This is Alkanesulfonate monooxygenase from Escherichia fergusonii (strain ATCC 35469 / DSM 13698 / CCUG 18766 / IAM 14443 / JCM 21226 / LMG 7866 / NBRC 102419 / NCTC 12128 / CDC 0568-73).